A 161-amino-acid chain; its full sequence is Large ribosomal subunit protein eL21 (161 aa).

The protein belongs to the eukaryotic ribosomal protein eL21 family.

This chain is Large ribosomal subunit protein eL21 (RPL21), found in Cyanophora paradoxa.